A 435-amino-acid chain; its full sequence is MSGTNYRTLAIVGSQWGDEGKGKITDYFAQQADLIVRWAGGDNAGHTIVIKRNKYKLSIVPSGAFNKKSMNVIGMVVVVNLRKLSYGNWVIYKQHGFDLLKNLRISDRVHLIFPYHMKIDELQEEYRQKDSIGTTKKGIGPCYQDKAERIGIRLGDLFDEKGFLQKLENNLKFKNEVLQKFLIVKDLTKINLKRIFWHYFQQIKSLVTDTSILVDNAIHNHQKFYLKEAQGVMLDLDHGTYPFVTSSNPTASSIPVGVGIAPRYINNVLGIVKAYNTRVGTGPFPSEIFGEVETYIREAGHEYGTVSGRARWIGWFDGILMKHSRELVVILVWLIMLLDVLTTIKELKICVGYEYQGQQIDYVPSTIKEYEMCKPILITMPGWDEDISNVTTFEGLPHNAQQYLMKLEEIVGVPISLFSVGPDREQTILMNKEIF.

GTP-binding positions include 17–23 (GDEGKGK) and 45–47 (GHT). Catalysis depends on D18, which acts as the Proton acceptor. D18 and G45 together coordinate Mg(2+). Residues 18–21 (DEGK), 43–46 (NAGH), T135, R149, Q230, T245, and R309 contribute to the IMP site. Catalysis depends on H46, which acts as the Proton donor. 305–311 (TVSGRAR) lines the substrate pocket. GTP-binding positions include R311, 337 to 339 (LLD), and 419 to 421 (SVG).

It belongs to the adenylosuccinate synthetase family. Homodimer. It depends on Mg(2+) as a cofactor.

Its subcellular location is the cytoplasm. The enzyme catalyses IMP + L-aspartate + GTP = N(6)-(1,2-dicarboxyethyl)-AMP + GDP + phosphate + 2 H(+). Its pathway is purine metabolism; AMP biosynthesis via de novo pathway; AMP from IMP: step 1/2. Its function is as follows. Plays an important role in the de novo pathway of purine nucleotide biosynthesis. Catalyzes the first committed step in the biosynthesis of AMP from IMP. The polypeptide is Adenylosuccinate synthetase (Spiroplasma citri).